A 62-amino-acid chain; its full sequence is Photosystem II reaction center protein Z (62 aa).

2 helical membrane-spanning segments follow: residues 8–28 (ALIALVLFSFVMVIGVPVAYA) and 41–61 (YLGSAIWAILVVIVAILNFFV).

Belongs to the PsbZ family. PSII is composed of 1 copy each of membrane proteins PsbA, PsbB, PsbC, PsbD, PsbE, PsbF, PsbH, PsbI, PsbJ, PsbK, PsbL, PsbM, PsbT, PsbX, PsbY, PsbZ, Psb30/Ycf12, peripheral proteins PsbO, CyanoQ (PsbQ), PsbU, PsbV and a large number of cofactors. It forms dimeric complexes.

Its subcellular location is the cellular thylakoid membrane. Functionally, may control the interaction of photosystem II (PSII) cores with the light-harvesting antenna, regulates electron flow through the 2 photosystem reaction centers. PSII is a light-driven water plastoquinone oxidoreductase, using light energy to abstract electrons from H(2)O, generating a proton gradient subsequently used for ATP formation. The chain is Photosystem II reaction center protein Z from Rippkaea orientalis (strain PCC 8801 / RF-1) (Cyanothece sp. (strain PCC 8801)).